Reading from the N-terminus, the 2148-residue chain is MNHVTIKQSDTRADPFRVFIFGDQSSCNLSNLQLLLFKKSNVYLASFIDQVNLTLRHEVARLTAAERQSFPAFSSVQNLVARALKKDTSVALESTLATIYHLCCFINYFGDGQEAYPTGPTTHVSGLCIGALAAAAVSSSKSLAELVQAGIDAVRVSLKVGLLVARTAALFSHQESNGTSSPPWSYAVPDSQLPLALAEEAIESYQAKTNIPPLSLPYISAKGQNSWTASGPPAIVQHFLETSQFEKTLRLTPLAVHAPYHAPHIFSAIDVQHIIRAVGPVSSFSSKLSFISSSSSRNLATGLKFQDLLYRAVEDILILPLDLREAAENIRLVLEATDNVQQCALFPISTGVGPSLKQSFSPAMASRVSIVDCIMERVAADAGPKSTSGPKPSESKIAIIGMSGRFPESADVEAFWDLLHQGLDVHRPVPPDRFNGELYYDVTGKRKNTCKVMHGCWINDPGLFDAKFFNISPKEAEQSDPGQRLALATAYEALEAAGVVADRTPSTQRDRVGVFYGMTSDDYREVSCGQNVDTYFIPGGNRAFTPGKINYFFKYCGPSVSVDTACSSSLAAIHLACNSIWRNECDTAIAGGTNVMSNPDSFVGLDRGYFLSRTGNCHTFDDEADGYCRADAVGTVILKRLEDAIADHDPILGVISGALTNHSADAVSITRPHSGAQEEIFSKLLTESGVHPHQVSYIEMHGTGTQAGDATEMTSVLNCFAPSTSTRRLPHESLHLGSTKANVGHSESASGVSALIKVLLMMEKNIIPPHCGIKGKINHKFPTDLDERNVHIAKTATQWNRRNELNNIRRAFVNNFSAAGGNTALLVEDYPLLIADSSQPDGRTAHVVTVSAKSIKSLKGNLENLKKFVQKQASTEGFLPKLSYTTTARRMHHPFRVAIPAANSEQLLSALNEELTHDSYTCCSESPVAFVFSGQGSQYSAMGQHLLHFTIFRDEVHAYDILAQRHGFPSIMPLIDGSVDIEDLEPLVVQLGTVCVQMALASLWMALGMRPAYVVGHSLGHYAALKVAGVLTASDTIYLVATRARLLQNKCSRGSHAMLAIRSSAAEIQAHLDEGIHDIACINGPQDTVVSGCIDDIDRLSQKLMDKGIKATRVNVPFAFHSAQVDPILDELEAVASQVEFHAPRVAIGCPLLSKTFKAGETPSLEAKHIRRHCRETVNFLDVLRSAKDDGLVSEKTAWIEIGPHTVCSNLVKANINQDITAVPSLMRNKDGWQVLASSVATLYRQGSSVAWDEYHHDFEACKQVLRLPAYSWDNKLYWIDYVHDWLLTRGDPPVQAAASLPAPPSSFSTASVHRIVHESVEKGKLTLTAECEFTNEQLHEVVYGHLVNGNRVCSSSLYTDFGVTLGSYILEKYRPDLQGHAVDVQDMVVNKALVHKEGPTMLLRIDVVLDTTDSKAASMSIYSVNSKGNKTADHAQSSLHFEQPKVWLKSWDSTQYYVERSIEWLKEKADQGLNSRMSSGVIYKLFSSLVDYSTAYKGMQEAIVNTEDFEATALVRFQVDEGNFRCNPMWVDSCGQLAGFLMNGHAKTPKDQVFINHGWQYFRTVRKFSRDKTYRTYVRMRCVEGTTYAGDVYIFDDDGIVGVCGSITFQGIPRKVLNTAMPPPKSQNEAPVRSGPAKPAVKPPRSASSEHSGHFARHANIEPLKLDAALKSATTARNPMLPVFKIVAEEIGIPSAGVDNGLVFADYGVDSLLSLSISGRLREELDLDVESSAFETCATLADLAAHLGMDTFSADQSSGQSSSSGGLSPRSDSIGEMTSSATTPPSMSPRGSVSGSQCKDVCAILAEEIGVSMGEITNDTDLGALGMDSLMSLAVLSRLREELELDLEGDFFVSHPNFSSFKHMFQQGHGDEAEPETSAELKQYRATSTLLQGSPKSALYTLFLLPDGSGSSFSYAPINAVRKDVCVFGLNCPWLKSAEKLVQFGLKGLATLYVEEIRRRAPHGPYNLGGWSAGGICAYEAAIQFTREGETVERLILLDSPNPIGLEKLPARLFDFVNGLGLFGDGKAPDWLLAHFLAFIDALDEWKPVPWDKALGGSSPPPMTYILWAEDGICKGTDARPEYRDDDPREMKWLLENRTNFGGNNWDVLLGQQSLSIERIQDANHFTMLRKGKNTERVAAFIRSIFG.

An N-terminal acylcarrier protein transacylase domain (SAT) region spans residues 19 to 261 (FIFGDQSSCN…TPLAVHAPYH (243 aa)). The 436-residue stretch at 394–829 (ESKIAIIGMS…GGNTALLVED (436 aa)) folds into the Ketosynthase family 3 (KS3) domain. Active-site for beta-ketoacyl synthase activity residues include cysteine 566, histidine 701, and histidine 745. Residues 929-1233 (AFVFSGQGSQ…PSLMRNKDGW (305 aa)) are malonyl-CoA:ACP transacylase (MAT) domain. The For acyl/malonyl transferase activity role is filled by serine 1018. Residues 1310–1624 (TASVHRIVHE…RKVLNTAMPP (315 aa)) are product template (PT) domain. Positions 1314–1447 (HRIVHESVEK…SSLHFEQPKV (134 aa)) are N-terminal hotdog fold. A PKS/mFAS DH domain is found at 1314–1619 (HRIVHESVEK…FQGIPRKVLN (306 aa)). Histidine 1346 acts as the Proton acceptor; for dehydratase activity in catalysis. The tract at residues 1474 to 1619 (LNSRMSSGVI…FQGIPRKVLN (146 aa)) is C-terminal hotdog fold. Aspartate 1533 functions as the Proton donor; for dehydratase activity in the catalytic mechanism. The tract at residues 1619–1655 (NTAMPPPKSQNEAPVRSGPAKPAVKPPRSASSEHSGH) is disordered. The 75-residue stretch at 1678 to 1752 (RNPMLPVFKI…DLAAHLGMDT (75 aa)) folds into the Carrier 1 domain. Residue serine 1712 is modified to O-(pantetheine 4'-phosphoryl)serine. Over residues 1755–1790 (ADQSSGQSSSSGGLSPRSDSIGEMTSSATTPPSMSP) the composition is skewed to low complexity. The interval 1755 to 1796 (ADQSSGQSSSSGGLSPRSDSIGEMTSSATTPPSMSPRGSVSG) is disordered. The Carrier 2 domain maps to 1793-1870 (SVSGSQCKDV…SFKHMFQQGH (78 aa)). O-(pantetheine 4'-phosphoryl)serine is present on serine 1830. The segment at 1882–2146 (LKQYRATSTL…ERVAAFIRSI (265 aa)) is thioesterase (TE) domain. Residue serine 1973 is the For thioesterase activity of the active site.

Polyketide synthase; part of the Pks1 gene cluster that mediates the biosynthesis of an anthraquinone derivative pigment that contributes to conidial pigmentation that provides protection from UV radiation, heat and cold stress. The polyketide synthase Pks1 produces 1-acetyl-2,4,6,8-tetrahydroxy-9,10-anthraquinone though condensation of acetyl-CoA with malonyl-CoA. The dehydratase EthD and the laccase Mlac1 further convert the anthraquinone derivative into the final conidial pigment. This is Polyketide synthase 1 from Metarhizium brunneum (strain ARSEF 3297).